The chain runs to 612 residues: Sulfite reductase [NADPH] hemoprotein beta-component (612 aa).

The interval 1–26 is disordered; sequence MDDHKPIETPDGPAVDTPGIGARRYE. Residues C469, C475, C514, and C518 each coordinate [4Fe-4S] cluster. C518 is a siroheme binding site.

The protein belongs to the nitrite and sulfite reductase 4Fe-4S domain family. As to quaternary structure, alpha(8)-beta(8). The alpha component is a flavoprotein, the beta component is a hemoprotein. It depends on siroheme as a cofactor. [4Fe-4S] cluster serves as cofactor.

It carries out the reaction hydrogen sulfide + 3 NADP(+) + 3 H2O = sulfite + 3 NADPH + 4 H(+). The protein operates within sulfur metabolism; hydrogen sulfide biosynthesis; hydrogen sulfide from sulfite (NADPH route): step 1/1. Its function is as follows. Component of the sulfite reductase complex that catalyzes the 6-electron reduction of sulfite to sulfide. This is one of several activities required for the biosynthesis of L-cysteine from sulfate. The polypeptide is Sulfite reductase [NADPH] hemoprotein beta-component (Methylorubrum extorquens (strain ATCC 14718 / DSM 1338 / JCM 2805 / NCIMB 9133 / AM1) (Methylobacterium extorquens)).